Consider the following 508-residue polypeptide: Photosystem II CP47 reaction center protein (508 aa).

6 helical membrane passes run 21-36, 101-115, 140-156, 203-218, 237-252, and 457-472; these read SVHI…WAGS, IVFS…IWHW, GIHL…FGAF, IAAG…FHLS, VLSS…AFVV, and SFAL…HGAR.

It belongs to the PsbB/PsbC family. PsbB subfamily. PSII is composed of 1 copy each of membrane proteins PsbA, PsbB, PsbC, PsbD, PsbE, PsbF, PsbH, PsbI, PsbJ, PsbK, PsbL, PsbM, PsbT, PsbX, PsbY, PsbZ, Psb30/Ycf12, at least 3 peripheral proteins of the oxygen-evolving complex and a large number of cofactors. It forms dimeric complexes. Binds multiple chlorophylls. PSII binds additional chlorophylls, carotenoids and specific lipids. is required as a cofactor.

The protein localises to the plastid. It is found in the chloroplast thylakoid membrane. In terms of biological role, one of the components of the core complex of photosystem II (PSII). It binds chlorophyll and helps catalyze the primary light-induced photochemical processes of PSII. PSII is a light-driven water:plastoquinone oxidoreductase, using light energy to abstract electrons from H(2)O, generating O(2) and a proton gradient subsequently used for ATP formation. The protein is Photosystem II CP47 reaction center protein of Olimarabidopsis pumila (Dwarf rocket).